Reading from the N-terminus, the 542-residue chain is CTP synthase (542 aa).

The amidoligase domain stretch occupies residues 1 to 265; it reads MARYVFITGG…DSEVLSAFGI (265 aa). Residue Ser-13 participates in CTP binding. Ser-13 contributes to the UTP binding site. 14–19 contributes to the ATP binding site; that stretch reads SLGKGI. Residue Tyr-54 participates in L-glutamine binding. ATP is bound at residue Asp-71. Mg(2+) contacts are provided by Asp-71 and Glu-139. Residues 146–148, 186–191, and Lys-222 each bind CTP; these read DIE and KTKPTQ. UTP contacts are provided by residues 186–191 and Lys-222; that span reads KTKPTQ. The Glutamine amidotransferase type-1 domain maps to 291–541; sequence TIAVVGKYTG…IEAAIEQSRL (251 aa). Gly-353 is a binding site for L-glutamine. The active-site Nucleophile; for glutamine hydrolysis is the Cys-380. Residues 381 to 384, Glu-404, and Arg-469 contribute to the L-glutamine site; that span reads FGMQ. Active-site residues include His-514 and Glu-516.

It belongs to the CTP synthase family. As to quaternary structure, homotetramer.

It catalyses the reaction UTP + L-glutamine + ATP + H2O = CTP + L-glutamate + ADP + phosphate + 2 H(+). The catalysed reaction is L-glutamine + H2O = L-glutamate + NH4(+). It carries out the reaction UTP + NH4(+) + ATP = CTP + ADP + phosphate + 2 H(+). It functions in the pathway pyrimidine metabolism; CTP biosynthesis via de novo pathway; CTP from UDP: step 2/2. Its activity is regulated as follows. Allosterically activated by GTP, when glutamine is the substrate; GTP has no effect on the reaction when ammonia is the substrate. The allosteric effector GTP functions by stabilizing the protein conformation that binds the tetrahedral intermediate(s) formed during glutamine hydrolysis. Inhibited by the product CTP, via allosteric rather than competitive inhibition. Its function is as follows. Catalyzes the ATP-dependent amination of UTP to CTP with either L-glutamine or ammonia as the source of nitrogen. Regulates intracellular CTP levels through interactions with the four ribonucleotide triphosphates. This chain is CTP synthase, found in Brucella melitensis biotype 1 (strain ATCC 23456 / CCUG 17765 / NCTC 10094 / 16M).